Reading from the N-terminus, the 296-residue chain is Phosphatidylglycerol--prolipoprotein diacylglyceryl transferase (296 aa).

A disordered region spans residues 1 to 21 (MRHRRRPGGRSTAGGTPVSQL). 7 helical membrane passes run 34–54 (GPLTIHIYALCILAGIVVAYI), 72–92 (ELCALAVIAGIIGGRLYHVIT), 108–128 (FFIWQGGLGIWGAISLGGLAI), 136–158 (GIRFASVADSLAPGILAAQAIGR), 195–215 (FHPTFLYELVWSLVGAVFLLW), 227–243 (LFTLYVAIYTFGRFWVE), and 258–278 (LNDVTALVVFTGAVVILIVLQ). Arginine 158 serves as a coordination point for a 1,2-diacyl-sn-glycero-3-phospho-(1'-sn-glycerol).

The protein belongs to the Lgt family.

It is found in the cell membrane. It catalyses the reaction L-cysteinyl-[prolipoprotein] + a 1,2-diacyl-sn-glycero-3-phospho-(1'-sn-glycerol) = an S-1,2-diacyl-sn-glyceryl-L-cysteinyl-[prolipoprotein] + sn-glycerol 1-phosphate + H(+). It participates in protein modification; lipoprotein biosynthesis (diacylglyceryl transfer). In terms of biological role, catalyzes the transfer of the diacylglyceryl group from phosphatidylglycerol to the sulfhydryl group of the N-terminal cysteine of a prolipoprotein, the first step in the formation of mature lipoproteins. The protein is Phosphatidylglycerol--prolipoprotein diacylglyceryl transferase of Cutibacterium acnes (strain DSM 16379 / KPA171202) (Propionibacterium acnes).